Reading from the N-terminus, the 547-residue chain is CTP synthase (547 aa).

Residues 1 to 267 (MKTKFIFITG…DQKIAIMLRL (267 aa)) form an amidoligase domain region. A CTP-binding site is contributed by Ser14. Position 14 (Ser14) interacts with UTP. ATP contacts are provided by residues 15 to 20 (SLGKGL) and Asp72. Mg(2+) contacts are provided by Asp72 and Glu141. CTP contacts are provided by residues 148–150 (DIE), 188–193 (KTKPTQ), and Lys224. UTP contacts are provided by residues 188–193 (KTKPTQ) and Lys224. Residues 292-545 (TIGIVGKYVD…IRAAKTHPAG (254 aa)) form the Glutamine amidotransferase type-1 domain. L-glutamine is bound at residue Gly354. Residue Cys381 is the Nucleophile; for glutamine hydrolysis of the active site. L-glutamine contacts are provided by residues 382–385 (LGMQ), Glu405, and Arg473. Active-site residues include His518 and Glu520.

It belongs to the CTP synthase family. In terms of assembly, homotetramer.

It catalyses the reaction UTP + L-glutamine + ATP + H2O = CTP + L-glutamate + ADP + phosphate + 2 H(+). It carries out the reaction L-glutamine + H2O = L-glutamate + NH4(+). The catalysed reaction is UTP + NH4(+) + ATP = CTP + ADP + phosphate + 2 H(+). Its pathway is pyrimidine metabolism; CTP biosynthesis via de novo pathway; CTP from UDP: step 2/2. Its activity is regulated as follows. Allosterically activated by GTP, when glutamine is the substrate; GTP has no effect on the reaction when ammonia is the substrate. The allosteric effector GTP functions by stabilizing the protein conformation that binds the tetrahedral intermediate(s) formed during glutamine hydrolysis. Inhibited by the product CTP, via allosteric rather than competitive inhibition. Its function is as follows. Catalyzes the ATP-dependent amination of UTP to CTP with either L-glutamine or ammonia as the source of nitrogen. Regulates intracellular CTP levels through interactions with the four ribonucleotide triphosphates. In Nitratidesulfovibrio vulgaris (strain DP4) (Desulfovibrio vulgaris), this protein is CTP synthase.